A 511-amino-acid polypeptide reads, in one-letter code: MSTIDSARPQLKIRSVALDTGRENVVVISRRSRALRPEVFSGFSRVELRCNSRTLLATLLITDDDALVGPDEIGLSQPALRRFAEPAGTFATVSPATPPDSLEAVRAKIRGETLSDQAISAVIDDLAHYRYSDMEIAAFLIGSASFMTSGELLALTRAMANAGTQLKWPEPVVVDKHCIGGIPGNRTSMVVVPIVAAHGLTIPKTSSRAITSPAGTADTMEVLARVNVGAEEMKSIVAACNGCVIWGGHVNLSPADDILISVERPLSLDTREQMVASILSKKLAAGSTHLLLDLPVGPTAKLSSGAEAMRLRKLFEFVGDRFGLNVEVITTDGRQPIGNGIGPVLEARDVMAVLGNEPGAPADLREKSLRLAAHLLEYDPKLRGGAGYQRARELLDSGAALKQMQKIIDAQGPTTSRNELGDLAFDVKAGRDGIVSAIDCLRLNRLARTAGAPINKGAGIRLFKKIGDRVDQGEPLYRVFTCDPSEHDLAVAAAAADHGYGFADEPNGHQR.

The protein belongs to the thymidine/pyrimidine-nucleoside phosphorylase family. Type 2 subfamily.

The enzyme catalyses thymidine + phosphate = 2-deoxy-alpha-D-ribose 1-phosphate + thymine. This Bradyrhizobium sp. (strain BTAi1 / ATCC BAA-1182) protein is Putative thymidine phosphorylase.